Here is an 837-residue protein sequence, read N- to C-terminus: V-type proton ATPase 116 kDa subunit a 1 (837 aa).

Over 1–388 the chain is Cytoplasmic; sequence MGELFRSEEM…DAYGIGSYRE (388 aa). Residues 389-407 form a helical membrane-spanning segment; that stretch reads INPAPYTIITFPFLFAVMF. The Vacuolar segment spans residues 408–409; the sequence is GD. Residues 410-426 form a helical membrane-spanning segment; that stretch reads FGHGILMTLFAVWMVVR. Over 427-441 the chain is Cytoplasmic; that stretch reads ESRILSQKIDNELFT. A helical membrane pass occupies residues 442–471; it reads MMFSGRYIILLMGLFSIYTGLIYNDCFSKA. At 472 to 534 the chain is on the vacuolar side; that stretch reads LNLFGSSWSV…ATNKLTFLNS (63 aa). Residues 535–554 form a helical membrane-spanning segment; sequence FKMKMSVVLGIIHMTFGVAL. Over 555-572 the chain is Cytoplasmic; the sequence is SLLNHIYFKKPLNIYLGF. Residues 573 to 593 form a helical membrane-spanning segment; that stretch reads IPEMIFMTTLFGYLVILIIYK. Topologically, residues 594 to 638 are vacuolar; it reads WCAYDASTSMVAPSLLIHFINMFLFSYQDTSLPMLYKGQMGLQCF. A helical transmembrane segment spans residues 639-658; the sequence is LVVCAIICVPWMLVVKPLIL. The Cytoplasmic portion of the chain corresponds to 659-724; it reads RRQYLRRKHL…DTVVHQAIHT (66 aa). A helical membrane pass occupies residues 725-749; sequence IEYCLGCISNTASYLRLWALSLAHA. Over 750–770 the chain is Vacuolar; sequence QLSEVLWTMVMHVGLSIRSLG. A helical transmembrane segment spans residues 771-809; it reads GGIALVFVFSAFATLTIAILLIMEGLSAFLHALRLHWVE. The Cytoplasmic segment spans residues 810–837; sequence FQNKFYMGTGFKFLPFSFENIREGKFDE.

The protein belongs to the V-ATPase 116 kDa subunit family. As to quaternary structure, V-ATPase is a heteromultimeric enzyme made up of two complexes: the ATP-hydrolytic V1 complex and the proton translocation V0 complex. The V1 complex consists of three catalytic AB heterodimers that form a heterohexamer, three peripheral stalks each consisting of EG heterodimers, one central rotor including subunits D and F, and the regulatory subunits C and H. The proton translocation complex V0 consists of the proton transport subunit a, a ring of proteolipid subunits c9c'', rotary subunit d, subunits e and f, and two accessory subunits.

It is found in the cytoplasmic vesicle. It localises to the clathrin-coated vesicle membrane. The protein localises to the secretory vesicle. Its subcellular location is the synaptic vesicle membrane. The protein resides in the melanosome. Subunit of the V0 complex of vacuolar(H+)-ATPase (V-ATPase), a multisubunit enzyme composed of a peripheral complex (V1) that hydrolyzes ATP and a membrane integral complex (V0) that translocates protons. V-ATPase is responsible for acidifying and maintaining the pH of intracellular compartments and in some cell types, is targeted to the plasma membrane, where it is responsible for acidifying the extracellular environment. Required for assembly and activity of the vacuolar ATPase. The protein is V-type proton ATPase 116 kDa subunit a 1 (atp6v0a1) of Xenopus tropicalis (Western clawed frog).